A 72-amino-acid chain; its full sequence is Brevinin-2SN4 (72 aa).

Positions 1 to 22 are cleaved as a signal peptide; it reads MFTMKKPMLLLFFLGMISMSLC. Residues 23-40 constitute a propeptide, removed in mature form; the sequence is QDERGADEDDGGEMTEEE. Cysteine 66 and cysteine 72 form a disulfide bridge.

This sequence belongs to the frog skin active peptide (FSAP) family. Brevinin subfamily. As to expression, expressed by the skin glands.

The protein localises to the secreted. Its function is as follows. Antimicrobial peptide. Active against a variety of Gram-negative and Gram-positive bacterial strains. Not active against fungi. Shows very weak hemolytic activity against human erythrocytes. This Sylvirana spinulosa (Fine-spined frog) protein is Brevinin-2SN4.